The primary structure comprises 108 residues: Probable 4-amino-4-deoxy-L-arabinose-phosphoundecaprenol flippase subunit ArnE (108 aa).

Transmembrane regions (helical) follow at residues Ser36–Gln56, Leu58–Gly78, and Pro85–Gly105.

The protein belongs to the ArnE family. In terms of assembly, heterodimer of ArnE and ArnF.

It localises to the cell inner membrane. It functions in the pathway bacterial outer membrane biogenesis; lipopolysaccharide biosynthesis. In terms of biological role, translocates 4-amino-4-deoxy-L-arabinose-phosphoundecaprenol (alpha-L-Ara4N-phosphoundecaprenol) from the cytoplasmic to the periplasmic side of the inner membrane. This chain is Probable 4-amino-4-deoxy-L-arabinose-phosphoundecaprenol flippase subunit ArnE, found in Pseudomonas syringae pv. syringae (strain B728a).